The following is a 429-amino-acid chain: UDP-N-acetylglucosamine 1-carboxyvinyltransferase (429 aa).

A phosphoenolpyruvate-binding site is contributed by 22 to 23; the sequence is KN. UDP-N-acetyl-alpha-D-glucosamine is bound at residue Arg-102. Cys-126 acts as the Proton donor in catalysis. Position 126 is a 2-(S-cysteinyl)pyruvic acid O-phosphothioketal (Cys-126). Residues Asp-316 and Ile-338 each contribute to the UDP-N-acetyl-alpha-D-glucosamine site.

It belongs to the EPSP synthase family. MurA subfamily.

The protein localises to the cytoplasm. The enzyme catalyses phosphoenolpyruvate + UDP-N-acetyl-alpha-D-glucosamine = UDP-N-acetyl-3-O-(1-carboxyvinyl)-alpha-D-glucosamine + phosphate. The protein operates within cell wall biogenesis; peptidoglycan biosynthesis. Its function is as follows. Cell wall formation. Adds enolpyruvyl to UDP-N-acetylglucosamine. In Methylorubrum extorquens (strain PA1) (Methylobacterium extorquens), this protein is UDP-N-acetylglucosamine 1-carboxyvinyltransferase.